The following is a 136-amino-acid chain: Histone H3.2 (136 aa).

The interval 1 to 43 (MARTKQTARKSTGGKAPRKQLATKAARKSAPATGGVKKPHRFR) is disordered. Position 5 is an N6-methylated lysine (K5). K10 is modified (N6-acetyllysine; alternate). K10 is modified (N6-methylated lysine; alternate). At S11 the chain carries Phosphoserine. The residue at position 12 (T12) is a Phosphothreonine. K15 is modified (N6-acetyllysine). An N6-acetyllysine; alternate mark is found at K19 and K24. K19 and K24 each carry N6-methylated lysine; alternate. K28 carries the N6-methylated lysine modification. Phosphoserine is present on S29. An N6-methylated lysine modification is found at K37.

The protein belongs to the histone H3 family. As to quaternary structure, the nucleosome is a histone octamer containing two molecules each of H2A, H2B, H3 and H4 assembled in one H3-H4 heterotetramer and two H2A-H2B heterodimers. The octamer wraps approximately 147 bp of DNA. Acetylation is generally linked to gene activation. Can be acetylated to form H3K9ac, H3K14ac, H3K18ac and H3K23ac. H3K9ac could compete with H3K9me and prevent gene silencing. H3K9ac is restricted to euchromatin. Post-translationally, methylated to form mainly H3K4me, H3K9me, H3K18me, H3K23me, H3K27me and H3K36me. H3K4me1/2/3, H3K9me3, H3K27me3 and H3K36me1/2/3 are typical marks for euchromatin, whereas heterochromatic chromocenters are enriched in H3K9me1/2 and H3K27me1/2. H2BK143ub1 is probably prerequisite for H3K4me. In terms of processing, can be phosphorylated to form H3S10ph, H3T11ph and H3S28ph. As to expression, expressed in bicellular pollen, root tips, shoot apices, young leaves and ovules.

Its subcellular location is the nucleus. The protein localises to the nucleolus. It localises to the chromosome. Functionally, core component of nucleosome. Nucleosomes wrap and compact DNA into chromatin, limiting DNA accessibility to the cellular machineries which require DNA as a template. Histones thereby play a central role in transcription regulation, DNA repair, DNA replication and chromosomal stability. DNA accessibility is regulated via a complex set of post-translational modifications of histones, also called histone code, and nucleosome remodeling. The chain is Histone H3.2 (YAH3) from Lilium longiflorum (Trumpet lily).